A 469-amino-acid polypeptide reads, in one-letter code: Bile acid receptor (469 aa).

K119 is covalently cross-linked (Glycyl lysine isopeptide (Lys-Gly) (interchain with G-Cter in SUMO1)). The nuclear receptor DNA-binding region spans 121-196; the sequence is DELCVVCGDR…MGMLAECLLT (76 aa). The NR C4-type zinc finger occupies 124-144; it reads CVVCGDRASGYHYNALTCEGC. S132 and S151 each carry phosphoserine; by PKC/PRKCA. Residue K154 is modified to N6-acetyllysine; by EP300. Residues 160 to 184 form an NR C4-type zinc finger; it reads CKNGGNCVMDMYMRRKCQDCRLRKC. K203 carries the N6-methyllysine; by SETD7 modification. An N6-acetyllysine; by EP300 modification is found at K210. In terms of domain architecture, NR LBD spans 245-469; the sequence is DQQTLLDYIM…PLLCEIWDVQ (225 aa). K272 is covalently cross-linked (Glycyl lysine isopeptide (Lys-Gly) (interchain with G-Cter in SUMO1)). R328 serves as a coordination point for 3beta,7beta-dihydroxy-5beta-cholan-24-oate. 3 residues coordinate chenodeoxycholate: R328, Y358, and Y366. Y366 contacts 3beta,7beta-dihydroxy-5beta-cholan-24-oate. T439 is subject to Phosphothreonine; by PKC/PRKCZ. H444 is a chenodeoxycholate binding site.

This sequence belongs to the nuclear hormone receptor family. NR1 subfamily. As to quaternary structure, heterodimer with RXRA; the heterodimerization enhances the binding affinity for LXXLL motifs from coactivators. Binds DNA predominantly as a heterodimer with RXRA. After activation by agonist binding interacts with coactivators. Interacts with NCOA1, NCOA2, PPARGC1A, CARM1, SETD7, PRMT1, GPS2, SMARCA4 and MED1, EP300 and SMARCD1. Interacts with XRCC5 and XRCC6; decreasing NR1H4/FXR transactivation activity towards ABCB11/BSEP. Interacts with PAGR1 AND NCOA6; indicative for an association with an MLL2/MLL3 complex (ASCOM). Acetylated by EP300. Lys-210 as is the major acetylation site for EP300; the dynamicly regulated acetylation inhibits heterodimerization with RXRA and transactivation activity. Deacetylated by SIRT1. Post-translationally, methylation may increase transactivation of target genes. In terms of processing, phosphorylation by PKC/PRKCA increases transactivation activity by promoting association with PPARGC1A. Sumoylated upon ligand binding.

The protein localises to the nucleus. Functionally, ligand-activated transcription factor. Receptor for bile acids (BAs) such as chenodeoxycholic acid (CDCA), lithocholic acid, deoxycholic acid (DCA) and allocholic acid (ACA). Plays a essential role in BA homeostasis through the regulation of genes involved in BA synthesis, conjugation and enterohepatic circulation. Also regulates lipid and glucose homeostasis and is involved innate immune response. The FXR-RXR heterodimer binds predominantly to farnesoid X receptor response elements (FXREs) containing two inverted repeats of the consensus sequence 5'-AGGTCA-3' in which the monomers are spaced by 1 nucleotide (IR-1) but also to tandem repeat DR1 sites with lower affinity, and can be activated by either FXR or RXR-specific ligands. It is proposed that monomeric nuclear receptors such as NR5A2/LRH-1 bound to coregulatory nuclear responsive element (NRE) halfsites located in close proximity to FXREs modulate transcriptional activity. In the liver activates transcription of the corepressor NR0B2 thereby indirectly inhibiting CYP7A1 and CYP8B1 (involved in BA synthesis) implicating at least in part histone demethylase KDM1A resulting in epigenomic repression, and SLC10A1/NTCP (involved in hepatic uptake of conjugated BAs). Activates transcription of the repressor MAFG (involved in regulation of BA synthesis). Activates transcription of SLC27A5/BACS and BAAT (involved in BA conjugation), ABCB11/BSEP (involved in bile salt export) by directly recruiting histone methyltransferase CARM1, and ABCC2/MRP2 (involved in secretion of conjugated BAs) and ABCB4 (involved in secretion of phosphatidylcholine in the small intestine). Activates transcription of SLC27A5/BACS and BAAT (involved in BA conjugation), ABCB11/BSEP (involved in bile salt export) by directly recruiting histone methyltransferase CARM1, and ABCC2/MRP2 (involved in secretion of conjugated BAs) and ABCB4 (involved in secretion of phosphatidylcholine in the small intestine). In the intestine activates FGF19 expression and secretion leading to hepatic CYP7A1 repression. The function also involves the coordinated induction of hepatic KLB/beta-klotho expression. Regulates transcription of liver UGT2B4 and SULT2A1 involved in BA detoxification; binding to the UGT2B4 promoter seems to imply a monomeric transactivation independent of RXRA. Modulates lipid homeostasis by activating liver NR0B2/SHP-mediated repression of SREBF1 (involved in de novo lipogenesis), expression of PLTP (involved in HDL formation), SCARB1 (involved in HDL hepatic uptake), APOE, APOC1, APOC4, PPARA (involved in beta-oxidation of fatty acids), VLDLR and SDC1 (involved in the hepatic uptake of LDL and IDL remnants), and inhibiting expression of MTTP (involved in VLDL assembly). Increases expression of APOC2 (promoting lipoprotein lipase activity implicated in triglyceride clearance). Transrepresses APOA1 involving a monomeric competition with NR2A1 for binding to a DR1 element. Also reduces triglyceride clearance by inhibiting expression of ANGPTL3 and APOC3 (both involved in inhibition of lipoprotein lipase). Involved in glucose homeostasis by modulating hepatic gluconeogenesis through activation of NR0B2/SHP-mediated repression of respective genes. Modulates glycogen synthesis (inducing phosphorylation of glycogen synthase kinase-3). Modulates glucose-stimulated insulin secretion and is involved in insulin resistance. Involved in intestinal innate immunity. Plays a role in protecting the distal small intestine against bacterial overgrowth and preservation of the epithelial barrier. Down-regulates inflammatory cytokine expression in several types of immune cells including macrophages and mononuclear cells. Mediates trans-repression of TLR4-induced cytokine expression; the function seems to require its sumoylation and prevents N-CoR nuclear receptor corepressor clearance from target genes such as IL1B and NOS2. Involved in the TLR9-mediated protective mechanism in intestinal inflammation. Plays an anti-inflammatory role in liver inflammation; proposed to inhibit pro-inflammatory (but not antiapoptotic) NF-kappa-B signaling. This chain is Bile acid receptor (Nr1h4), found in Rattus norvegicus (Rat).